Reading from the N-terminus, the 428-residue chain is Glutamyl-tRNA reductase (428 aa).

Substrate is bound by residues 49–52 (TCNR), S109, 114–116 (EGQ), and Q120. C50 (nucleophile) is an active-site residue. Residue 189–194 (GAGKMS) coordinates NADP(+).

Belongs to the glutamyl-tRNA reductase family. In terms of assembly, homodimer.

It carries out the reaction (S)-4-amino-5-oxopentanoate + tRNA(Glu) + NADP(+) = L-glutamyl-tRNA(Glu) + NADPH + H(+). It functions in the pathway porphyrin-containing compound metabolism; protoporphyrin-IX biosynthesis; 5-aminolevulinate from L-glutamyl-tRNA(Glu): step 1/2. It participates in porphyrin-containing compound metabolism; chlorophyll biosynthesis. Its function is as follows. Catalyzes the NADPH-dependent reduction of glutamyl-tRNA(Glu) to glutamate 1-semialdehyde (GSA). This chain is Glutamyl-tRNA reductase, found in Gloeothece citriformis (strain PCC 7424) (Cyanothece sp. (strain PCC 7424)).